A 135-amino-acid chain; its full sequence is Photosystem II extrinsic protein U (135 aa).

A signal peptide spans 1–29; it reads MKRLLSWLTGALLMAGLLAGLILPGSVHA.

It belongs to the PsbU family. PSII is composed of 1 copy each of membrane proteins PsbA, PsbB, PsbC, PsbD, PsbE, PsbF, PsbH, PsbI, PsbJ, PsbK, PsbL, PsbM, PsbT, PsbX, PsbY, Psb30/Ycf12, peripheral proteins PsbO, CyanoQ (PsbQ), PsbU, PsbV and a large number of cofactors. It forms dimeric complexes.

It is found in the cellular thylakoid membrane. In terms of biological role, one of the extrinsic, lumenal subunits of photosystem II (PSII). PSII is a light-driven water plastoquinone oxidoreductase, using light energy to abstract electrons from H(2)O, generating a proton gradient subsequently used for ATP formation. The extrinsic proteins stabilize the structure of photosystem II oxygen-evolving complex (OEC), the ion environment of oxygen evolution and protect the OEC against heat-induced inactivation. The chain is Photosystem II extrinsic protein U from Parasynechococcus marenigrum (strain WH8102).